The chain runs to 145 residues: Peptide methionine sulfoxide reductase MsrB (145 aa).

The MsrB domain occupies 6 to 129 (KNERLQQLTD…NSAALRFIPV (124 aa)). The active-site Nucleophile is Cys118.

Belongs to the MsrB Met sulfoxide reductase family.

It carries out the reaction L-methionyl-[protein] + [thioredoxin]-disulfide + H2O = L-methionyl-(R)-S-oxide-[protein] + [thioredoxin]-dithiol. The chain is Peptide methionine sulfoxide reductase MsrB from Listeria monocytogenes serotype 4a (strain HCC23).